Here is a 241-residue protein sequence, read N- to C-terminus: uncharacterized protein (241 aa).

Belongs to the AB hydrolase superfamily. AB hydrolase 2 family.

This is an uncharacterized protein from Schizosaccharomyces pombe (strain 972 / ATCC 24843) (Fission yeast).